Consider the following 424-residue polypeptide: MEPLDTLNLWMERARDRARAISFGRFLWHRFLDDRLFQAAAALAYTTVFALVPLAIVVFGVLSAFPVFDRWSDQLSDYVFSNFVPNAARAAEGYLRQFSASAGQLTAAGFIALVVSLLITLNSVEETFNQIWRVGSTRPKLTRFLVYWTVLTLGAMLAAASLAVSARVFAMPLFGTQEGRWLADLALRLAPILIEFVCITLMFRVVPHHTVKWRHAVPGAILAAVILELVKWGIGAYLGSFQSYQKLYGTVAFVPILLLWIYLCWVAVLLGASLSSSMAAFRYQPVELRLPQGYEFYGLLRLLGRFHHARAKGKGLADDEILRLEPMLTDSLLQDLACNLQEIGLLRRDERGEWLLARDLEQVSLSDLYECTQLRIPVAEQHLPYRDDTLGRVALAALDDLRLPLRERLKRKVSDIYTDSGDTP.

6 helical membrane-spanning segments follow: residues 48 to 68, 101 to 121, 144 to 164, 181 to 201, 216 to 236, and 251 to 271; these read VFALVPLAIVVFGVLSAFPVF, SAGQLTAAGFIALVVSLLITL, FLVYWTVLTLGAMLAAASLAV, WLADLALRLAPILIEFVCITL, AVPGAILAAVILELVKWGIGA, and VAFVPILLLWIYLCWVAVLLG.

Belongs to the UPF0761 family.

The protein resides in the cell inner membrane. In Stenotrophomonas maltophilia (strain R551-3), this protein is UPF0761 membrane protein Smal_0716.